Consider the following 450-residue polypeptide: tRNA modification GTPase MnmE (450 aa).

(6S)-5-formyl-5,6,7,8-tetrahydrofolate contacts are provided by Arg-23, Glu-79, and Lys-118. The region spanning 214–374 (GITLILVGKP…LKEHILNKVG (161 aa)) is the TrmE-type G domain. Residue Asn-224 coordinates K(+). Residues 224–229 (NAGKSS), 243–249 (TSIAGTT), and 268–271 (DTAG) contribute to the GTP site. Residue Ser-228 coordinates Mg(2+). The K(+) site is built by Thr-243, Ile-245, and Thr-248. Residue Thr-249 coordinates Mg(2+). Lys-450 contributes to the (6S)-5-formyl-5,6,7,8-tetrahydrofolate binding site.

This sequence belongs to the TRAFAC class TrmE-Era-EngA-EngB-Septin-like GTPase superfamily. TrmE GTPase family. As to quaternary structure, homodimer. Heterotetramer of two MnmE and two MnmG subunits. The cofactor is K(+).

Its subcellular location is the cytoplasm. Exhibits a very high intrinsic GTPase hydrolysis rate. Involved in the addition of a carboxymethylaminomethyl (cmnm) group at the wobble position (U34) of certain tRNAs, forming tRNA-cmnm(5)s(2)U34. This is tRNA modification GTPase MnmE from Francisella tularensis subsp. holarctica (strain OSU18).